Here is a 140-residue protein sequence, read N- to C-terminus: Fluoride-specific ion channel FluC 1 (140 aa).

The next 4 membrane-spanning stretches (helical) occupy residues 4-24 (LYLA…ASFI), 32-52 (FPLA…FILT), 70-90 (TGML…LHLL), and 99-119 (LLYL…GIFL). Na(+)-binding residues include glycine 74 and threonine 77.

It belongs to the fluoride channel Fluc/FEX (TC 1.A.43) family.

It is found in the cell membrane. It carries out the reaction fluoride(in) = fluoride(out). Na(+) is not transported, but it plays an essential structural role and its presence is essential for fluoride channel function. In terms of biological role, fluoride-specific ion channel. Important for reducing fluoride concentration in the cell, thus reducing its toxicity. This Moorella thermoacetica (strain ATCC 39073 / JCM 9320) protein is Fluoride-specific ion channel FluC 1.